An 85-amino-acid chain; its full sequence is uncharacterized protein (85 aa).

Helical transmembrane passes span 20–42 (IYWF…TTFL) and 52–69 (IILR…KHYY).

The protein resides in the membrane. This is an uncharacterized protein from Saccharomyces cerevisiae (strain ATCC 204508 / S288c) (Baker's yeast).